We begin with the raw amino-acid sequence, 1483 residues long: Ubiquitin fusion degradation protein 4 (1483 aa).

The interval 1-117 (MSENNSHNLD…NNEFGSNPLH (117 aa)) is disordered. Positions 8 to 18 (NLDEHESHSEN) are enriched in basic and acidic residues. Residues 61–70 (EADDGEDDDN) show a composition bias toward acidic residues. The residue at position 87 (T87) is a Phosphothreonine. K349 is covalently cross-linked (Glycyl lysine isopeptide (Lys-Gly) (interchain with G-Cter in ubiquitin)). Residues 1007 to 1081 (CGVKSDSFIN…LIQLWKNKSK (75 aa)) are K-box. The HECT domain occupies 1376 to 1483 (AEHGYTMDSS…EEGAGAFLLS (108 aa)). C1450 serves as the catalytic Glycyl thioester intermediate.

Belongs to the UPL family. K-HECT subfamily.

The enzyme catalyses S-ubiquitinyl-[E2 ubiquitin-conjugating enzyme]-L-cysteine + [acceptor protein]-L-lysine = [E2 ubiquitin-conjugating enzyme]-L-cysteine + N(6)-ubiquitinyl-[acceptor protein]-L-lysine.. In terms of biological role, E3 ubiquitin-protein ligase which accepts ubiquitin from an E2 ubiquitin-conjugating enzyme in the form of a thioester and then directly transfers the ubiquitin to targeted substrates. The sequence is that of Ubiquitin fusion degradation protein 4 (UFD4) from Saccharomyces cerevisiae (strain ATCC 204508 / S288c) (Baker's yeast).